Here is a 317-residue protein sequence, read N- to C-terminus: Protein-methionine-sulfoxide reductase catalytic subunit MsrP (317 aa).

Positions 1–40 (MKKLTSNDVTPEEIFYQRRKIIKAFGLSAVATALPTFSFA) form a signal peptide, tat-type signal. Residues Asn71, 74–75 (YE), Cys129, Thr164, Asn216, Arg221, and 232–234 (SIK) each bind Mo-molybdopterin.

The protein belongs to the MsrP family. In terms of assembly, heterodimer of a catalytic subunit (MsrP) and a heme-binding subunit (MsrQ). It depends on Mo-molybdopterin as a cofactor. Predicted to be exported by the Tat system. The position of the signal peptide cleavage has not been experimentally proven.

The protein resides in the periplasm. The enzyme catalyses L-methionyl-[protein] + a quinone + H2O = L-methionyl-(S)-S-oxide-[protein] + a quinol. The catalysed reaction is L-methionyl-[protein] + a quinone + H2O = L-methionyl-(R)-S-oxide-[protein] + a quinol. Its function is as follows. Part of the MsrPQ system that repairs oxidized periplasmic proteins containing methionine sulfoxide residues (Met-O), using respiratory chain electrons. Thus protects these proteins from oxidative-stress damage caused by reactive species of oxygen and chlorine generated by the host defense mechanisms. MsrPQ is essential for the maintenance of envelope integrity under bleach stress, rescuing a wide series of structurally unrelated periplasmic proteins from methionine oxidation. The catalytic subunit MsrP is non-stereospecific, being able to reduce both (R-) and (S-) diastereoisomers of methionine sulfoxide. This Histophilus somni (strain 2336) (Haemophilus somnus) protein is Protein-methionine-sulfoxide reductase catalytic subunit MsrP.